A 598-amino-acid polypeptide reads, in one-letter code: Nuclear receptor subfamily 4 group A member 2 (598 aa).

The segment at Met1 to Tyr22 is disordered. The span at Tyr8–Tyr22 shows a compositional bias: low complexity. The segment at residues Glu260–Thr335 is a DNA-binding region (nuclear receptor). 2 consecutive NR C4-type zinc fingers follow at residues Cys263–Cys283 and Cys299–Cys323. The Bipartite nuclear localization signal (NLS1) motif lies at Phe287–Arg314. The interval Ser337–Pro361 is disordered. The short motif at Leu338 to Lys350 is the Nuclear localization signal (NLS1) element. Pro residues predominate over residues Pro352 to Pro361. One can recognise an NR LBD domain in the interval Pro360–Thr595. The nuclear export sequence (NES1) signature appears at Phe443 to Ala452. The short motif at Gln568–Lys577 is the nuclear export sequence (NES2) element.

The protein belongs to the nuclear hormone receptor family. NR4 subfamily. Interacts with SFPQ, NCOR2, SIN3A and HADC1. The interaction with NCOR2 increases in the absence of PITX3. Interacts with PER2. Brain.

It is found in the cytoplasm. Its subcellular location is the nucleus. In terms of biological role, transcriptional regulator which is important for the differentiation and maintenance of meso-diencephalic dopaminergic (mdDA) neurons during development. It is crucial for expression of a set of genes such as SLC6A3, SLC18A2, TH and DRD2 which are essential for development of mdDA neurons. This Mus musculus (Mouse) protein is Nuclear receptor subfamily 4 group A member 2 (Nr4a2).